We begin with the raw amino-acid sequence, 511 residues long: Aldehyde dehydrogenase 2, mitochondrial (511 aa).

Residues 1 to 21 (MSKSKTKTDKRNQSSLSRIKL) constitute a mitochondrion transit peptide. The tract at residues 72-92 (VSEKSQHDSTEEDITQVSEKS) is disordered. 274 to 279 (GSTLVG) serves as a coordination point for NAD(+). Glu297 serves as the catalytic Proton acceptor. Cys331 (nucleophile) is an active-site residue.

This sequence belongs to the aldehyde dehydrogenase family.

Its subcellular location is the mitochondrion matrix. It catalyses the reaction an aldehyde + NAD(+) + H2O = a carboxylate + NADH + 2 H(+). Its pathway is alcohol metabolism; ethanol degradation; acetate from ethanol: step 2/2. The polypeptide is Aldehyde dehydrogenase 2, mitochondrial (ALD2) (Saccharomyces cerevisiae (Baker's yeast)).